A 353-amino-acid polypeptide reads, in one-letter code: Guanine nucleotide-binding protein G(q) subunit alpha (353 aa).

2 S-palmitoyl cysteine lipidation sites follow: cysteine 3 and cysteine 4. A G-alpha domain is found at 32–353 (RELKLLLLGT…QLNLKEYNLV (322 aa)). Positions 35 to 48 (KLLLLGTGESGKST) are G1 motif. GTP is bound by residues 40–47 (GTGESGKS), 174–180 (LRVRAPT), 199–203 (DVGGQ), 268–271 (NKKD), and alanine 325. The Mg(2+) site is built by serine 47 and threonine 180. The G2 motif stretch occupies residues 172-180 (DILRVRAPT). The interval 195–204 (FRMVDVGGQR) is G3 motif. The G4 motif stretch occupies residues 264–271 (ILFLNKKD). The interval 323–328 (TCATDT) is G5 motif.

This sequence belongs to the G-alpha family. G(q) subfamily. In terms of assembly, g proteins are composed of 3 units; alpha, beta and gamma. The alpha chain contains the guanine nucleotide binding site.

Its function is as follows. Guanine nucleotide-binding proteins (G proteins) are involved as modulators or transducers in various transmembrane signaling systems. This chain is Guanine nucleotide-binding protein G(q) subunit alpha, found in Homarus americanus (American lobster).